The primary structure comprises 317 residues: tRNA dimethylallyltransferase (317 aa).

Residue 14-21 coordinates ATP; that stretch reads GPTASGKT. 16–21 serves as a coordination point for substrate; sequence TASGKT. Interaction with substrate tRNA stretches follow at residues 39-42 and 163-167; these read DSAL and QRIQR.

This sequence belongs to the IPP transferase family. Monomer. It depends on Mg(2+) as a cofactor.

It carries out the reaction adenosine(37) in tRNA + dimethylallyl diphosphate = N(6)-dimethylallyladenosine(37) in tRNA + diphosphate. In terms of biological role, catalyzes the transfer of a dimethylallyl group onto the adenine at position 37 in tRNAs that read codons beginning with uridine, leading to the formation of N6-(dimethylallyl)adenosine (i(6)A). In Stenotrophomonas maltophilia (strain R551-3), this protein is tRNA dimethylallyltransferase.